The following is a 548-amino-acid chain: MSASLNYKSFSKEQQTMDNLEKQLICPICLEMFTKPVVILPCQHNLCRKCASDIFQASNPYLPTRGGTTMASGGRFRCPSCRHEVVLDRHGVYGLQRNLLVENIIDIYKQESTRPEKKSDQPMCEEHEEERINIYCLNCEVPTCSLCKVFGAHKDCQVAPLTHVFQRQKSELSDGIAILVGSNDRVQGVISQLEDTCKTIEECCRKQKQELCEKFDYLYGILEERKNEMTQVITRTQEEKLEHVRALIKKYSDHLENVSKLVESGIQFMDEPEMAVFLQNAKTLLKKISEASKAFQMEKIEHGYENMNHFTVNLNREEKIIREIDFYREDEDEEEEEGGEGEKEGEGEVGGEAVEVEEVENVQTEFPGEDENPEKASELSQVELQAAPGALPVSSPEPPPALPPAADAPVTQGEVVPTGSEQTTESETPVPAAAETADPLFYPSWYKGQTRKATTNPPCTPGSEGLGQIGPPGSEDSNVRKAEVAAAAASERAAVSGKETSAPAATSQIGFEAPPLQGQAAAPASGSGADSEPARHIFSFSWLNSLNE.

The segment at 10 to 66 (FSKEQQTMDNLEKQLICPICLEMFTKPVVILPCQHNLCRKCASDIFQASNPYLPTRG) adopts an RING-type zinc-finger fold. The B box-type zinc finger occupies 103–145 (NIIDIYKQESTRPEKKSDQPMCEEHEEERINIYCLNCEVPTCS). The Zn(2+) site is built by C124, H127, C147, and H153. Positions 168–248 (QKSELSDGIA…EKLEHVRALI (81 aa)) form a coiled coil. A COS domain is found at 269–327 (MDEPEMAVFLQNAKTLLKKISEASKAFQMEKIEHGYENMNHFTVNLNREEKIIREIDFY). The disordered stretch occupies residues 326 to 532 (FYREDEDEEE…PASGSGADSE (207 aa)). Acidic residues-rich tracts occupy residues 328–339 (REDEDEEEEEGG) and 347–360 (GEVG…EEVE). Low complexity-rich tracts occupy residues 484–496 (VAAA…AAVS) and 512–531 (EAPP…GADS).

Homooligomer and heterooligomer. Interacts with titin/TTN. Interacts with myosins. Interacts with SQSTM1 and NBR1. Isoform 4 may not able to interact with isoform 1, isoform 2 and isoform 3. Probably interacts with TRIM63 and TRIM54. In terms of processing, targeted for degradation through the proteasomal and lysosomal pathways in the presence of SUMO3. As to expression, highly expressed in muscle. Low-level expression in liver.

Its subcellular location is the nucleus. It is found in the cytoplasm. The catalysed reaction is S-ubiquitinyl-[E2 ubiquitin-conjugating enzyme]-L-cysteine + [acceptor protein]-L-lysine = [E2 ubiquitin-conjugating enzyme]-L-cysteine + N(6)-ubiquitinyl-[acceptor protein]-L-lysine.. Its function is as follows. E3 ubiquitin ligase that plays an important role in regulating cardiac development and contractility, muscle growth, metabolism, and fiber-type differentiation. Acts as a critical factor that regulates cardiomyocyte size during development in concert with TRIM63 by regulating E2F1-mediated gene expression. Plays a role in apoptosis induction in cardiomyocytes by promoting ubiquitination of the DUSP1 phosphatase. Promotes non-canonical NF-kappa-B signaling and B-cell-mediated immune responses by mediating NFKB2 'Lys-48'-linked ubiquitination and processing. In turn, NFKB2 is further processed by valosin-containing protein/VCP, an ATPase that mediates ubiquitin-dependent protein degradation by the proteasome. May play a role in preventing macrophages from producing inflammatory factors and migrating by downregulating the level of nuclear NF-kappa-B subunit RELA. Also modifies PPARG via polyubiquitination and accelerates PPARG proteasomal degradation to inhibit its activity. The protein is Tripartite motif-containing protein 55 (TRIM55) of Homo sapiens (Human).